The sequence spans 84 residues: Acid stress protein IbaG (84 aa).

This sequence belongs to the BolA/IbaG family.

Functionally, involved in cell resistance against acid stress. This Escherichia coli O6:H1 (strain CFT073 / ATCC 700928 / UPEC) protein is Acid stress protein IbaG.